A 531-amino-acid chain; its full sequence is Probable protein phosphatase 2C 66 (531 aa).

The segment at 1 to 47 is disordered; that stretch reads MGSCLSSDLPPRAGAGAGASPGWPQRWRRRRQRGVERGGAVSGGGGG. Low complexity predominate over residues 10 to 25; it reads PPRAGAGAGASPGWPQ. Residues 88–401 enclose the PPM-type phosphatase domain; the sequence is AACLHTQQGR…DDCAVVCLFL (314 aa). Positions 123 and 124 each coordinate Mn(2+). Residues 151 to 172 are compositionally biased toward polar residues; that stretch reads SANEDTSSHQNGSISGSVNSEE. The segment at 151 to 176 is disordered; it reads SANEDTSSHQNGSISGSVNSEESPVV. Asp-346 and Asp-392 together coordinate Mn(2+).

It belongs to the PP2C family. Mg(2+) is required as a cofactor. It depends on Mn(2+) as a cofactor.

The enzyme catalyses O-phospho-L-seryl-[protein] + H2O = L-seryl-[protein] + phosphate. The catalysed reaction is O-phospho-L-threonyl-[protein] + H2O = L-threonyl-[protein] + phosphate. The sequence is that of Probable protein phosphatase 2C 66 from Oryza sativa subsp. japonica (Rice).